We begin with the raw amino-acid sequence, 443 residues long: Ribosomal protein uS12 methylthiotransferase RimO (443 aa).

An MTTase N-terminal domain is found at 8-118; sequence PKIGFVSLGC…VLSHIHHYVP (111 aa). 6 residues coordinate [4Fe-4S] cluster: cysteine 17, cysteine 53, cysteine 82, cysteine 150, cysteine 154, and cysteine 157. The Radical SAM core domain occupies 136 to 373; that stretch reads LTPRHYAYLK…MQLQQQISTE (238 aa). Residues 376 to 442 form the TRAM domain; sequence QEKIGKVLPV…EYDLWGTIVE (67 aa).

Belongs to the methylthiotransferase family. RimO subfamily. [4Fe-4S] cluster is required as a cofactor.

Its subcellular location is the cytoplasm. It catalyses the reaction L-aspartate(89)-[ribosomal protein uS12]-hydrogen + (sulfur carrier)-SH + AH2 + 2 S-adenosyl-L-methionine = 3-methylsulfanyl-L-aspartate(89)-[ribosomal protein uS12]-hydrogen + (sulfur carrier)-H + 5'-deoxyadenosine + L-methionine + A + S-adenosyl-L-homocysteine + 2 H(+). Functionally, catalyzes the methylthiolation of an aspartic acid residue of ribosomal protein uS12. In Proteus mirabilis (strain HI4320), this protein is Ribosomal protein uS12 methylthiotransferase RimO.